Here is a 235-residue protein sequence, read N- to C-terminus: MPWGLAWLYCLGILLDVALGNENLEIWTLTQDKECDLTGYLRGKLQYKNRLQYMKHYFPINYRIAVPYEGVLRVANITRLQKAHVSERELRYLWVLVSLNATESVMDVLLEGHPSWKYLQEVQTLLENVQRSLMDVEIGPHVEAVLSLLSTPGLSLKLVRPKALLDNCFRVMELLYCSCCKQSPILKWQDCELPRLHPHSPGSLMQCTATNVYPLSRQTPTSLPGSPSSSHGSLP.

A signal peptide spans 1 to 20; it reads MPWGLAWLYCLGILLDVALG. Residue Asn100 is glycosylated (N-linked (GlcNAc...) asparagine).

Belongs to the IL-34 family. As to quaternary structure, homodimer. Interacts with CSF1R.

The protein localises to the secreted. Its function is as follows. Cytokine that promotes the proliferation, survival and differentiation of monocytes and macrophages. Promotes the release of pro-inflammatory chemokines, and thereby plays an important role in innate immunity and in inflammatory processes. Plays an important role in the regulation of osteoclast proliferation and differentiation, and in the regulation of bone resorption. Signaling via CSF1R and its downstream effectors stimulates phosphorylation of MAPK1/ERK2 AND MAPK3/ERK1. The sequence is that of Interleukin-34 (Il34) from Mus musculus (Mouse).